The following is a 216-amino-acid chain: GTPase IMAP family member GIMD1 (216 aa).

Residues 5–216 (KMTINLALFG…ENCYQVLTFK (212 aa)) enclose the AIG1-type G domain. Residues 14-22 (GMTQSGKSS), serine 35, and 147-149 (HAE) each bind GTP.

This sequence belongs to the TRAFAC class TrmE-Era-EngA-EngB-Septin-like GTPase superfamily. AIG1/Toc34/Toc159-like paraseptin GTPase family. IAN subfamily.

The polypeptide is GTPase IMAP family member GIMD1 (GIMD1) (Bos taurus (Bovine)).